The chain runs to 488 residues: UDP-N-acetylmuramoyl-L-alanyl-D-glutamate--2,6-diaminopimelate ligase (488 aa).

Residues Leu24, Ser26, and 41-43 (HQV) each bind UDP-N-acetyl-alpha-D-muramoyl-L-alanyl-D-glutamate. An ATP-binding site is contributed by 113 to 119 (GTNGKTT). UDP-N-acetyl-alpha-D-muramoyl-L-alanyl-D-glutamate contacts are provided by residues Asn154, 155 to 156 (TT), Ser182, Gln188, and Arg190. Lys222 carries the N6-carboxylysine modification. Residues Arg386, 410–413 (DNPR), Gly461, and Glu465 each bind meso-2,6-diaminopimelate. The short motif at 410 to 413 (DNPR) is the Meso-diaminopimelate recognition motif element.

Belongs to the MurCDEF family. MurE subfamily. The cofactor is Mg(2+). Post-translationally, carboxylation is probably crucial for Mg(2+) binding and, consequently, for the gamma-phosphate positioning of ATP.

The protein resides in the cytoplasm. It catalyses the reaction UDP-N-acetyl-alpha-D-muramoyl-L-alanyl-D-glutamate + meso-2,6-diaminopimelate + ATP = UDP-N-acetyl-alpha-D-muramoyl-L-alanyl-gamma-D-glutamyl-meso-2,6-diaminopimelate + ADP + phosphate + H(+). The protein operates within cell wall biogenesis; peptidoglycan biosynthesis. Functionally, catalyzes the addition of meso-diaminopimelic acid to the nucleotide precursor UDP-N-acetylmuramoyl-L-alanyl-D-glutamate (UMAG) in the biosynthesis of bacterial cell-wall peptidoglycan. This chain is UDP-N-acetylmuramoyl-L-alanyl-D-glutamate--2,6-diaminopimelate ligase, found in Haemophilus influenzae (strain ATCC 51907 / DSM 11121 / KW20 / Rd).